Consider the following 83-residue polypeptide: Exodeoxyribonuclease 7 small subunit (83 aa).

Residues V63–R83 are disordered.

This sequence belongs to the XseB family. Heterooligomer composed of large and small subunits.

Its subcellular location is the cytoplasm. The enzyme catalyses Exonucleolytic cleavage in either 5'- to 3'- or 3'- to 5'-direction to yield nucleoside 5'-phosphates.. In terms of biological role, bidirectionally degrades single-stranded DNA into large acid-insoluble oligonucleotides, which are then degraded further into small acid-soluble oligonucleotides. This chain is Exodeoxyribonuclease 7 small subunit, found in Gluconobacter oxydans (strain 621H) (Gluconobacter suboxydans).